The chain runs to 339 residues: UDP-N-acetylenolpyruvoylglucosamine reductase (339 aa).

The 172-residue stretch at 18-189 (GIDVRARLLA…LRVRLRLTRR (172 aa)) folds into the FAD-binding PCMH-type domain. The active site involves Arg-166. The Proton donor role is filled by Ser-239. The active site involves Glu-335.

The protein belongs to the MurB family. FAD is required as a cofactor.

It is found in the cytoplasm. The enzyme catalyses UDP-N-acetyl-alpha-D-muramate + NADP(+) = UDP-N-acetyl-3-O-(1-carboxyvinyl)-alpha-D-glucosamine + NADPH + H(+). It functions in the pathway cell wall biogenesis; peptidoglycan biosynthesis. In terms of biological role, cell wall formation. This Pseudomonas aeruginosa (strain ATCC 15692 / DSM 22644 / CIP 104116 / JCM 14847 / LMG 12228 / 1C / PRS 101 / PAO1) protein is UDP-N-acetylenolpyruvoylglucosamine reductase.